Here is a 220-residue protein sequence, read N- to C-terminus: Deoxyribose-phosphate aldolase (220 aa).

Asp-89 acts as the Proton donor/acceptor in catalysis. The active-site Schiff-base intermediate with acetaldehyde is Lys-151. Lys-180 (proton donor/acceptor) is an active-site residue.

The protein belongs to the DeoC/FbaB aldolase family. DeoC type 1 subfamily.

Its subcellular location is the cytoplasm. It catalyses the reaction 2-deoxy-D-ribose 5-phosphate = D-glyceraldehyde 3-phosphate + acetaldehyde. It functions in the pathway carbohydrate degradation; 2-deoxy-D-ribose 1-phosphate degradation; D-glyceraldehyde 3-phosphate and acetaldehyde from 2-deoxy-alpha-D-ribose 1-phosphate: step 2/2. Its function is as follows. Catalyzes a reversible aldol reaction between acetaldehyde and D-glyceraldehyde 3-phosphate to generate 2-deoxy-D-ribose 5-phosphate. This Streptococcus equi subsp. equi (strain 4047) protein is Deoxyribose-phosphate aldolase.